The primary structure comprises 508 residues: MSNQTYRDSEYLDGLSGEELFNLQIGLTYRDFLVLPGFIDFHPSEVELETRLTRNIKLKRPFISSPMDTVTESQMAIAQALMGGIGIIHYNNTIEEQVALVEKVKRFENGFITDPVILGPKNVIRDLDAIKERKGFTGIPVTEDGTRNSKLIGIVTNRDIDFEKNREITLDKVMTTNLITGKEGITLQDANEIIKKSKIGKLPIVDSQGKLVSLVSRSDLKKNKEFPDASKDERKRLRCGAAVSTLLESRDRVAALYEAGVDVIIIDSAQGNSNYQIEMIQFIKKEFKNLDIVAGNVVTRAQAENLIRAGADGLRIGMGPGSICITQDTMAVGRAQATAIYQTAKHSAKYDVPVIADGGISNIGDIANSLAIGASTCMMGFMFAGTTEAPGEYFYENGIRLKKYRGMASIEAMKAGGDKRYFNEGQKVKVAQGVSGSVVDRGSILNFIPYLSQGLRLSFQDMGYKSIPEIHKALRDGKLRFERRSESAQAQGSVHGLYSFSAPTMRAE.

CBS domains are found at residues 111–170 and 174–230; these read FITD…EITL and MTTN…PDAS. NAD(+) contacts are provided by residues D267 and 317–319; that span reads GMG. Residues G319 and G321 each contribute to the K(+) site. Residue S322 participates in IMP binding. C324 contributes to the K(+) binding site. C324 functions as the Thioimidate intermediate in the catalytic mechanism. IMP-binding positions include 357 to 359, 380 to 381, and 404 to 408; these read DGG, GF, and YRGMA. R420 acts as the Proton acceptor in catalysis. Residue Q432 coordinates IMP. Residue G492 coordinates K(+).

Belongs to the IMPDH/GMPR family. Homotetramer. K(+) is required as a cofactor.

The catalysed reaction is IMP + NAD(+) + H2O = XMP + NADH + H(+). The protein operates within purine metabolism; XMP biosynthesis via de novo pathway; XMP from IMP: step 1/1. Its activity is regulated as follows. Mycophenolic acid (MPA) is a non-competitive inhibitor that prevents formation of the closed enzyme conformation by binding to the same site as the amobile flap. In contrast, mizoribine monophosphate (MZP) is a competitive inhibitor that induces the closed conformation. MPA is a potent inhibitor of mammalian IMPDHs but a poor inhibitor of the bacterial enzymes. MZP is a more potent inhibitor of bacterial IMPDH. In terms of biological role, catalyzes the conversion of inosine 5'-phosphate (IMP) to xanthosine 5'-phosphate (XMP), the first committed and rate-limiting step in the de novo synthesis of guanine nucleotides, and therefore plays an important role in the regulation of cell growth. This Leptospira interrogans serogroup Icterohaemorrhagiae serovar Lai (strain 56601) protein is Inosine-5'-monophosphate dehydrogenase.